The sequence spans 342 residues: Probable dual-specificity RNA methyltransferase RlmN (342 aa).

The active-site Proton acceptor is the Glu-91. The region spanning 97–327 is the Radical SAM core domain; that stretch reads YKHGNSICVS…TTIRREMGAD (231 aa). The cysteines at positions 104 and 332 are disulfide-linked. Positions 111, 115, and 118 each coordinate [4Fe-4S] cluster. Residues 158–159, Ser-190, 213–215, and Asn-289 each bind S-adenosyl-L-methionine; these read GE and SLH. Residue Cys-332 is the S-methylcysteine intermediate of the active site.

The protein belongs to the radical SAM superfamily. RlmN family. [4Fe-4S] cluster is required as a cofactor.

The protein resides in the cytoplasm. It carries out the reaction adenosine(2503) in 23S rRNA + 2 reduced [2Fe-2S]-[ferredoxin] + 2 S-adenosyl-L-methionine = 2-methyladenosine(2503) in 23S rRNA + 5'-deoxyadenosine + L-methionine + 2 oxidized [2Fe-2S]-[ferredoxin] + S-adenosyl-L-homocysteine. The enzyme catalyses adenosine(37) in tRNA + 2 reduced [2Fe-2S]-[ferredoxin] + 2 S-adenosyl-L-methionine = 2-methyladenosine(37) in tRNA + 5'-deoxyadenosine + L-methionine + 2 oxidized [2Fe-2S]-[ferredoxin] + S-adenosyl-L-homocysteine. In terms of biological role, specifically methylates position 2 of adenine 2503 in 23S rRNA and position 2 of adenine 37 in tRNAs. The chain is Probable dual-specificity RNA methyltransferase RlmN from Clostridium botulinum (strain ATCC 19397 / Type A).